Reading from the N-terminus, the 378-residue chain is Ubiquitin-conjugating enzyme E2 Q2 (378 aa).

The tract at residues Asp126–Glu152 is disordered. Over residues Val140–Glu152 the composition is skewed to acidic residues. In terms of domain architecture, UBC core spans Gln207 to Tyr371. Residue Cys307 is the Glycyl thioester intermediate of the active site.

The protein belongs to the ubiquitin-conjugating enzyme family. Post-translationally, auto-ubiquitinated in vitro.

Its subcellular location is the cytoplasm. It carries out the reaction S-ubiquitinyl-[E1 ubiquitin-activating enzyme]-L-cysteine + [E2 ubiquitin-conjugating enzyme]-L-cysteine = [E1 ubiquitin-activating enzyme]-L-cysteine + S-ubiquitinyl-[E2 ubiquitin-conjugating enzyme]-L-cysteine.. Its pathway is protein modification; protein ubiquitination. Its function is as follows. Accepts ubiquitin from the E1 complex and catalyzes its covalent attachment to other proteins. In vitro catalyzes 'Lys-48'-linked polyubiquitination. This chain is Ubiquitin-conjugating enzyme E2 Q2 (Ube2q2), found in Mus musculus (Mouse).